A 497-amino-acid chain; its full sequence is Phenylalanine--tRNA ligase alpha subunit (497 aa).

L-phenylalanine-binding positions include Thr-329, 372–374 (QIE), and Tyr-412. Glu-414 contributes to the Mg(2+) binding site. L-phenylalanine is bound at residue Phe-438.

Belongs to the class-II aminoacyl-tRNA synthetase family. Phe-tRNA synthetase alpha subunit type 2 subfamily. In terms of assembly, heterotetramer; dimer of two heterodimers formed by alpha and beta subunits. Requires Mg(2+) as cofactor.

It is found in the cytoplasm. The catalysed reaction is tRNA(Phe) + L-phenylalanine + ATP = L-phenylalanyl-tRNA(Phe) + AMP + diphosphate + H(+). The protein is Phenylalanine--tRNA ligase alpha subunit (farsa) of Danio rerio (Zebrafish).